Consider the following 338-residue polypeptide: Aspartate-semialdehyde dehydrogenase (338 aa).

NADP(+) is bound by residues 13–16 (SGAV) and 41–42 (RS). Arg101 provides a ligand contact to phosphate. Cys132 acts as the Acyl-thioester intermediate in catalysis. Gln159 is a binding site for substrate. NADP(+) contacts are provided by residues 162 to 163 (SG) and Pro187. Lys216 provides a ligand contact to phosphate. Substrate is bound at residue Arg238. The active-site Proton acceptor is His245. Asn317 serves as a coordination point for NADP(+).

The protein belongs to the aspartate-semialdehyde dehydrogenase family. Homodimer.

The catalysed reaction is L-aspartate 4-semialdehyde + phosphate + NADP(+) = 4-phospho-L-aspartate + NADPH + H(+). The protein operates within amino-acid biosynthesis; L-lysine biosynthesis via DAP pathway; (S)-tetrahydrodipicolinate from L-aspartate: step 2/4. It functions in the pathway amino-acid biosynthesis; L-methionine biosynthesis via de novo pathway; L-homoserine from L-aspartate: step 2/3. It participates in amino-acid biosynthesis; L-threonine biosynthesis; L-threonine from L-aspartate: step 2/5. In terms of biological role, catalyzes the NADPH-dependent formation of L-aspartate-semialdehyde (L-ASA) by the reductive dephosphorylation of L-aspartyl-4-phosphate. This chain is Aspartate-semialdehyde dehydrogenase, found in Shewanella sp. (strain DB6705).